A 326-amino-acid polypeptide reads, in one-letter code: G-protein coupled receptor 1 (326 aa).

N-acetylserine is present on serine 2. At 2–23 (SAVLTAGGGLTAGDRSIITAIN) the chain is on the extracellular side. Residues 24–44 (TGASSLSFVGSAFIVLCYCLF) form a helical membrane-spanning segment. Topologically, residues 45-51 (KELRKFS) are cytoplasmic. The helical transmembrane segment at 52 to 72 (FKLVFYLALSDMLCSFFLIVG) threads the bilayer. Topologically, residues 73-84 (DPSKGFICYAQG) are extracellular. Cysteines 80 and 151 form a disulfide. The chain crosses the membrane as a helical span at residues 85–105 (YTTHFFCVASFLWTTTIAFTL). Residues 106–120 (HRTVVKHKTDVEDLE) lie on the Cytoplasmic side of the membrane. A helical membrane pass occupies residues 121 to 141 (AMFHLYVWGTSLVVTVIRSFG). At 142 to 160 (NNHSHLGPWCWTQTGLKGK) the chain is on the extracellular side. A glycan (N-linked (GlcNAc...) asparagine) is linked at asparagine 143. Residues 161 to 181 (AVHFLTFYAPLWGAILYNGFT) form a helical membrane-spanning segment. Topologically, residues 182 to 213 (YFQVIRMLRNARRMAVGMSDRVDQFDNRAELK) are cytoplasmic. A helical transmembrane segment spans residues 214–234 (VLNRWGYYPLILIGSWAFGTI). At 235 to 246 (NRIHDFIEPGHK) the chain is on the extracellular side. A helical membrane pass occupies residues 247-267 (IFWLSVLDVGTAALMGLFNSI). Topologically, residues 268–326 (AYGFNSSVRRAIHERLELFLPERLYRWLPSNFRPKNHLILHQQQQQRSEMVSLKTEDQQ) are cytoplasmic.

This sequence belongs to the G-protein coupled receptor 2 family. As to quaternary structure, interacts with GPA1. Mostly present in the meristematic regions. Expressed at low levels in seedlings, vascular tissues of cotyledons, hypocotyl, and roots, stems, leaves, flowering buds and siliques. In dark-grown seedlings, localized in the cotyledons and the hook.

It is found in the cell membrane. Together with GPA1, may regulate the cell cycle via a signaling cascade that uses phosphatidylinositol-specific phospholipase C (PI-PLC) as an effector and inositol 1,4,5-trisphosphate(IP(3)) as a second messenger. Promotes PI-PLC activity and IP(3) accumulation. Involved in the blue light (BL) signaling. Together with GPA1 and ADT3, required for BL-mediated synthesis of phenylpyruvate and subsequently of phenylalanine (Phe), in etiolated seedlings. Probably involved in cytokinin signal transduction. Plays a positive role in gibberellin- (GA) and brassinosteroid- (BR) regulated seed germination, probably independently of a heterotrimeric G-protein. Mediates seed dormancy abolition, and promotes seed germination and flowering. This is G-protein coupled receptor 1 (GCR1) from Arabidopsis thaliana (Mouse-ear cress).